Consider the following 532-residue polypeptide: Phosphoenolpyruvate carboxykinase (ATP) (532 aa).

Residues arginine 60, tyrosine 194, and lysine 200 each coordinate substrate. ATP-binding positions include lysine 200, histidine 219, and 237–245 (GLSGTGKTT). Mn(2+) is bound by residues lysine 200 and histidine 219. Aspartate 258 serves as a coordination point for Mn(2+). ATP is bound by residues glutamate 286, arginine 324, and threonine 449. Arginine 324 provides a ligand contact to substrate.

This sequence belongs to the phosphoenolpyruvate carboxykinase (ATP) family. Mn(2+) serves as cofactor.

Its subcellular location is the cytoplasm. It carries out the reaction oxaloacetate + ATP = phosphoenolpyruvate + ADP + CO2. The protein operates within carbohydrate biosynthesis; gluconeogenesis. Involved in the gluconeogenesis. Catalyzes the conversion of oxaloacetate (OAA) to phosphoenolpyruvate (PEP) through direct phosphoryl transfer between the nucleoside triphosphate and OAA. The sequence is that of Phosphoenolpyruvate carboxykinase (ATP) from Ruegeria sp. (strain TM1040) (Silicibacter sp.).